Consider the following 1923-residue polypeptide: Endoribonuclease Dicer (1923 aa).

The 177-residue stretch at 51–227 (LLEAALDHNT…ELEEKIQKLE (177 aa)) folds into the Helicase ATP-binding domain. 64 to 71 (LNTGSGKT) contacts ATP. Residues 175-178 (DECH) carry the DECH box motif. Residues 256–595 (DCGPFTDRSG…LRNKCSKSVD (340 aa)) are required for interaction with PRKRA and TARBP2. Residues 410-433 (VSWSDSEDDEEDEEIEEKEKPETN) form a disordered region. A phosphoserine mark is found at S413 and S415. Over residues 414–425 (DSEDDEEDEEIE) the composition is skewed to acidic residues. Positions 433–602 (NFPSPFTNIL…SVDTGEADTE (170 aa)) constitute a Helicase C-terminal domain. In terms of domain architecture, Dicer dsRNA-binding fold spans 629–721 (AIGHVNRYCA…MPVGKETVKY (93 aa)). Residues 894 to 1041 (KFMEDIEKSE…LVPELCAIHP (148 aa)) form the PAZ domain. Phosphoserine occurs at positions 1015 and 1160. Polar residues-rich tracts occupy residues 1246–1255 (NANTSTSDGS) and 1277–1290 (SEQSPSPGYSSRTL). The interval 1246–1291 (NANTSTSDGSPVTAAVPGTTETGEAPPDRTASEQSPSPGYSSRTLG) is disordered. The RNase III 1 domain occupies 1276 to 1404 (ASEQSPSPGY…TEKWEKDEMT (129 aa)). Mg(2+) contacts are provided by E1316, E1396, and E1399. Phosphoserine is present on residues S1461, S1469, and S1471. The region spanning 1667–1825 (FENFEKKINY…LAGAIYMDSG (159 aa)) is the RNase III 2 domain. Positions 1706, 1811, and 1814 each coordinate Mg(2+). The DRBM domain maps to 1853–1915 (SPVRELLEME…ARRALRSLKA (63 aa)). S1869 carries the phosphoserine modification.

The protein belongs to the helicase family. Dicer subfamily. In terms of assembly, component of the RISC loading complex (RLC), or micro-RNA (miRNA) loading complex (miRLC), which is composed of DICER1, AGO2 and TARBP2; DICER1 and TARBP2 are required to process precursor miRNAs (pre-miRNAs) to mature miRNAs and then load them onto AGO2. Note that the trimeric RLC/miRLC is also referred to as RISC. Interacts with DHX9, AGO1, PIWIL1 and PRKRA. Interacts with AGO2, TARBP2, EIF6, MOV10 and RPL7A (60S ribosome subunit); they form a large RNA-induced silencing complex (RISC). Interacts with BCDIN3D. Interacts (via Dicer dsRNA-binding fold domain) with ALOX5 (via PLAT domain); this interaction enhances arachidonate 5-lipoxygenase activity and modifies the miRNA precursor processing activity of DICER1. The cofactor is Mg(2+). Requires Mn(2+) as cofactor.

Its subcellular location is the cytoplasm. It catalyses the reaction Endonucleolytic cleavage to 5'-phosphomonoester.. Double-stranded RNA (dsRNA) endoribonuclease playing a central role in short dsRNA-mediated post-transcriptional gene silencing. Cleaves naturally occurring long dsRNAs and short hairpin pre-microRNAs (miRNA) into fragments of twenty-one to twenty-three nucleotides with 3' overhang of two nucleotides, producing respectively short interfering RNAs (siRNA) and mature microRNAs. SiRNAs and miRNAs serve as guide to direct the RNA-induced silencing complex (RISC) to complementary RNAs to degrade them or prevent their translation. Gene silencing mediated by siRNAs, also called RNA interference, controls the elimination of transcripts from mobile and repetitive DNA elements of the genome but also the degradation of exogenous RNA of viral origin for instance. The miRNA pathway on the other side is a mean to specifically regulate the expression of target genes. In Bos taurus (Bovine), this protein is Endoribonuclease Dicer (DICER1).